The following is a 322-amino-acid chain: Pantothenate kinase (322 aa).

104-111 (GSVAVGKS) contributes to the ATP binding site.

The protein belongs to the prokaryotic pantothenate kinase family.

The protein resides in the cytoplasm. The catalysed reaction is (R)-pantothenate + ATP = (R)-4'-phosphopantothenate + ADP + H(+). Its pathway is cofactor biosynthesis; coenzyme A biosynthesis; CoA from (R)-pantothenate: step 1/5. The polypeptide is Pantothenate kinase (Leifsonia xyli subsp. xyli (strain CTCB07)).